Consider the following 382-residue polypeptide: Mannitol-1-phosphate 5-dehydrogenase (382 aa).

NAD(+) is bound at residue A4–G15.

The protein belongs to the mannitol dehydrogenase family.

The catalysed reaction is D-mannitol 1-phosphate + NAD(+) = beta-D-fructose 6-phosphate + NADH + H(+). In Vibrio campbellii (strain ATCC BAA-1116), this protein is Mannitol-1-phosphate 5-dehydrogenase.